The sequence spans 86 residues: MTLSFDDAAATVKTLKTSPSNDELLKLYALFKQGTVGDNTTDKPGMFDLKGKAKWSAWDEKKGLAKDDAQKAYVALVEELIAKYGA.

The ACB domain maps to 1–86 (MTLSFDDAAA…VEELIAKYGA (86 aa)). An acyl-CoA is bound by residues Lys13, 28-32 (YALFK), Lys50, Lys54, and Tyr73.

The protein belongs to the ACBP family.

Binds medium- and long-chain acyl-CoA esters with very high affinity and may function as an intracellular carrier of acyl-CoA esters. The protein is Acyl-CoA-binding protein homolog 1 (acbp-1) of Caenorhabditis elegans.